Reading from the N-terminus, the 324-residue chain is Glyoxylate/hydroxypyruvate reductase B (324 aa).

Residues R237 and E266 contribute to the active site. H285 (proton donor) is an active-site residue.

This sequence belongs to the D-isomer specific 2-hydroxyacid dehydrogenase family. GhrB subfamily. Homodimer.

It localises to the cytoplasm. The catalysed reaction is glycolate + NADP(+) = glyoxylate + NADPH + H(+). The enzyme catalyses (R)-glycerate + NAD(+) = 3-hydroxypyruvate + NADH + H(+). It carries out the reaction (R)-glycerate + NADP(+) = 3-hydroxypyruvate + NADPH + H(+). In terms of biological role, catalyzes the NADPH-dependent reduction of glyoxylate and hydroxypyruvate into glycolate and glycerate, respectively. In Shigella flexneri, this protein is Glyoxylate/hydroxypyruvate reductase B.